Consider the following 135-residue polypeptide: Phosphomevalonate dehydratase small subunit (135 aa).

Ser-67 acts as the Proton acceptor in catalysis.

This sequence belongs to the AcnX type II small subunit family. Heterodimer composed of a large subunit (PMDh-L) and a small subunit (PMDh-S).

It catalyses the reaction (R)-5-phosphomevalonate = (2E)-3-methyl-5-phosphooxypent-2-enoate + H2O. It participates in isoprenoid biosynthesis; isopentenyl diphosphate biosynthesis via mevalonate pathway. Its function is as follows. Component of a hydro-lyase that catalyzes the dehydration of mevalonate 5-phosphate (MVA5P) to form trans-anhydromevalonate 5-phosphate (tAHMP). Involved in the archaeal mevalonate (MVA) pathway, which provides fundamental precursors for isoprenoid biosynthesis, such as isopentenyl diphosphate (IPP) and dimethylallyl diphosphate (DMAPP). This is Phosphomevalonate dehydratase small subunit from Methanopyrus kandleri (strain AV19 / DSM 6324 / JCM 9639 / NBRC 100938).